The chain runs to 265 residues: L-histidine 2-aminobutanoyltransferase (265 aa).

This sequence belongs to the methyltransferase superfamily. CntL family.

The catalysed reaction is L-histidine + S-adenosyl-L-methionine = (2S)-2-amino-4-{[(1S)-1-carboxy-2-(1H-imidazol-4-yl)ethyl]amino}butanoate + S-methyl-5'-thioadenosine + H(+). Catalyzes the nucleophilic attack of one alpha-aminobutanoate moiety from SAM onto L-histidine to produce the intermediate (2S)-2-amino-4-{[(1S)-1-carboxy-2-(1H-imidazol-4-yl)ethyl]amino}butanoate. Functions in the biosynthesis of the metallophore yersinopine, which is involved in metal acquisition and thus enables bacterial growth inside the host, where metal access is limited. Therefore, this enzyme probably contributes to Yersinia virulence. In Yersinia pestis, this protein is L-histidine 2-aminobutanoyltransferase.